A 191-amino-acid polypeptide reads, in one-letter code: MIRISDAAQAHFAKLLANQEEGTQIRVFVINPGTPNAECGVSYCPPDAVEATDTALKFDLLTAYVDELSAPYLEDAEIDFVTDQLGSQLTLKAPNAKMRKVADDAPLMERVEYVLQSQINPQLAGHGGRVSLMEITDEGYAILQFGGGCNGCSMVDVTLKEGIEKQLLNEFPELKGVRDLTEHQRGEHSYY.

Residues C149 and C152 each coordinate [4Fe-4S] cluster.

This sequence belongs to the NfuA family. In terms of assembly, homodimer. [4Fe-4S] cluster serves as cofactor.

Involved in iron-sulfur cluster biogenesis. Binds a 4Fe-4S cluster, can transfer this cluster to apoproteins, and thereby intervenes in the maturation of Fe/S proteins. Could also act as a scaffold/chaperone for damaged Fe/S proteins. The protein is Fe/S biogenesis protein NfuA of Salmonella arizonae (strain ATCC BAA-731 / CDC346-86 / RSK2980).